Consider the following 327-residue polypeptide: Phenylalanine--tRNA ligase alpha subunit (327 aa).

Glu-252 serves as a coordination point for Mg(2+).

The protein belongs to the class-II aminoacyl-tRNA synthetase family. Phe-tRNA synthetase alpha subunit type 1 subfamily. As to quaternary structure, tetramer of two alpha and two beta subunits. Mg(2+) is required as a cofactor.

The protein localises to the cytoplasm. It carries out the reaction tRNA(Phe) + L-phenylalanine + ATP = L-phenylalanyl-tRNA(Phe) + AMP + diphosphate + H(+). This chain is Phenylalanine--tRNA ligase alpha subunit, found in Shewanella oneidensis (strain ATCC 700550 / JCM 31522 / CIP 106686 / LMG 19005 / NCIMB 14063 / MR-1).